The chain runs to 785 residues: Tripartite terminase subunit 1 (785 aa).

A C3H1-type zinc finger spans residues 197-225; the sequence is CAVCFEELCVTANQGATIARRLADRICNH. Positions 433-489 are disordered; the sequence is GGAADAPKGGAGPDDDGDRVAVEEGTRGLGAPGGGGEDEDRRRGPGGQGPETWGDIA. 696-703 serves as a coordination point for ATP; that stretch reads FASVYRCG.

Belongs to the herpesviridae TRM1 protein family. As to quaternary structure, associates with TRM2 and TRM3 to form the tripartite terminase complex. Interacts with portal protein.

Its subcellular location is the host nucleus. Functionally, component of the molecular motor that translocates viral genomic DNA in empty capsid during DNA packaging. Forms a tripartite terminase complex together with TRM2 and TRM3 in the host cytoplasm. Once the complex reaches the host nucleus, it interacts with the capsid portal vertex. This portal forms a ring in which genomic DNA is translocated into the capsid. TRM1 carries an endonuclease activity that plays an important role for the cleavage of concatemeric viral DNA into unit length genomes. In Human herpesvirus 1 (strain Angelotti) (HHV-1), this protein is Tripartite terminase subunit 1.